Reading from the N-terminus, the 112-residue chain is Urease subunit beta (112 aa).

Belongs to the urease beta subunit family. Heterotrimer of UreA (gamma), UreB (beta) and UreC (alpha) subunits. Three heterotrimers associate to form the active enzyme.

Its subcellular location is the cytoplasm. The catalysed reaction is urea + 2 H2O + H(+) = hydrogencarbonate + 2 NH4(+). Its pathway is nitrogen metabolism; urea degradation; CO(2) and NH(3) from urea (urease route): step 1/1. In Polaromonas sp. (strain JS666 / ATCC BAA-500), this protein is Urease subunit beta.